Consider the following 341-residue polypeptide: NADH-ubiquinone oxidoreductase chain 1 (341 aa).

Transmembrane regions (helical) follow at residues 2–22 (IINI…VAYL), 39–59 (PNFV…KLLL), 71–91 (IILV…WVVI), 104–124 (LGIL…LLSG), 141–161 (AQLI…IMFV), 175–195 (VVWY…ASVA), 212–230 (VAGY…FFLA), 243–263 (GYLL…NILF), 276–296 (LINS…FIWV), and 308–328 (LINF…LIIP).

Belongs to the complex I subunit 1 family. As to quaternary structure, complex I is composed of 37 different subunits.

It is found in the mitochondrion inner membrane. The enzyme catalyses a ubiquinone + NADH + 5 H(+)(in) = a ubiquinol + NAD(+) + 4 H(+)(out). In terms of biological role, core subunit of the mitochondrial membrane respiratory chain NADH dehydrogenase (Complex I) that is believed to belong to the minimal assembly required for catalysis. Complex I functions in the transfer of electrons from NADH to the respiratory chain. The immediate electron acceptor for the enzyme is believed to be ubiquinone. This Yarrowia lipolytica (strain CLIB 122 / E 150) (Yeast) protein is NADH-ubiquinone oxidoreductase chain 1 (ND1).